Reading from the N-terminus, the 1055-residue chain is Protein SUPPRESSOR OF QUENCHING 1, chloroplastic (1055 aa).

A chloroplast-targeting transit peptide spans 1 to 56; that stretch reads MALKLTSPPSVFSQSRRLSSSSLIPIRSKSTFTGFRSRTGVYLSKTTALQSSTKLS. V57 bears the N-acetylvaline mark. Residues 59-327 lie on the Stromal side of the membrane; it reads AESPAATIAT…FQGSRRDILR (269 aa). D80 (nucleophile) is an active-site residue. Mg(2+) contacts are provided by D80 and D82. D80 is a substrate binding site. D82 (proton donor) is an active-site residue. Residues E89, 118-122, 141-144, and 183-189 each bind substrate; these read TGEAK, AKER, and SSADRIK. D242 is a Mg(2+) binding site. The chain crosses the membrane as a helical span at residues 328 to 345; that stretch reads YGSLGIALSCVYFAATNW. Over 346–1055 the chain is Lumenal; the sequence is KAMQYASPKA…AGGLQLQGTR (710 aa). The Thioredoxin domain maps to 359–536; it reads ALVGAKSPSF…LDDVVAAALT (178 aa). Residues C431 and C434 are joined by a disulfide bond. 5 NHL repeats span residues 565–597, 611–647, 673–712, 802–832, and 854–887; these read PLKFPGKLAIDTLNNRLFISDSNHNRIIVTDLE, GFQDGSFEDAAFNRPQGLAYNAKKNLLYVADTENHAL, GRKGTKQLLNSPWDVCFEPVNEKVYIAMAGQHQIWEYSVL, LQHPLGVLCANDGQIYLTDSYNHKIKKLDPV, and GAQLSEPAGLAITENGRLFVADTNNSLIRYIDLN.

In the N-terminal section; belongs to the HAD-like hydrolase superfamily. It in the C-terminal section; belongs to the thioredoxin family. Mg(2+) is required as a cofactor.

The protein localises to the plastid. It localises to the chloroplast thylakoid membrane. Required to maintain light harvesting efficiency, especially during nonphotochemical quenching (NPQ) recovery, via the regulation of chlorophyll excited-state lifetime probably by preventing the formation of a slowly reversible form of antenna quenching. The chain is Protein SUPPRESSOR OF QUENCHING 1, chloroplastic from Arabidopsis thaliana (Mouse-ear cress).